A 237-amino-acid chain; its full sequence is Phosphoribosylaminoimidazole-succinocarboxamide synthase (237 aa).

This sequence belongs to the SAICAR synthetase family.

The catalysed reaction is 5-amino-1-(5-phospho-D-ribosyl)imidazole-4-carboxylate + L-aspartate + ATP = (2S)-2-[5-amino-1-(5-phospho-beta-D-ribosyl)imidazole-4-carboxamido]succinate + ADP + phosphate + 2 H(+). Its pathway is purine metabolism; IMP biosynthesis via de novo pathway; 5-amino-1-(5-phospho-D-ribosyl)imidazole-4-carboxamide from 5-amino-1-(5-phospho-D-ribosyl)imidazole-4-carboxylate: step 1/2. This is Phosphoribosylaminoimidazole-succinocarboxamide synthase from Listeria monocytogenes serovar 1/2a (strain ATCC BAA-679 / EGD-e).